The following is a 228-amino-acid chain: MGQKVHPIGIRLGITKDWNARWYADSKNYSDFLISDIEIRKELNEKLKHASVSQINIERVANGVRVTIHTARPGVVIGKKGEDIEKLKQALIAKTGMPVNINIEEIKKPELDAKLVAEGIAQQLEKRIQFRRAMKRAVSNAMRLGAQGIKVNVSGRLNGAEIARAEWYREGRVPLHTLRADIDYATFEADTTYGKIGVKVWIFKGEKLEKISMVSDDKKQSKGKKGRK.

One can recognise a KH type-2 domain in the interval 39 to 107 (IRKELNEKLK…PVNINIEEIK (69 aa)).

The protein belongs to the universal ribosomal protein uS3 family. In terms of assembly, part of the 30S ribosomal subunit. Forms a tight complex with proteins S10 and S14.

Its function is as follows. Binds the lower part of the 30S subunit head. Binds mRNA in the 70S ribosome, positioning it for translation. In Hydrogenovibrio crunogenus (strain DSM 25203 / XCL-2) (Thiomicrospira crunogena), this protein is Small ribosomal subunit protein uS3.